Here is a 379-residue protein sequence, read N- to C-terminus: Protein FAM53B (379 aa).

Disordered regions lie at residues 206 to 257 (CPAE…HKQR) and 302 to 348 (AQND…AGKE). Polar residues predominate over residues 212–236 (SPESTPELQRRSGQSGLARSRSQPC). The segment covering 239–249 (NHQKIGVKRRR) has biased composition (basic residues). Positions 246–249 (KRRR) match the Nuclear localization signal motif. Residues 326–342 (QSDSSSADALIHQSESS) show a composition bias toward polar residues.

This sequence belongs to the FAM53 family. Interacts with ctnnb1. As to expression, mainly expressed in proliferating tissues.

The protein localises to the nucleus. Acts as a regulator of Wnt signaling pathway by regulating beta-catenin (ctnnb1) nuclear localization. Required for appendage regeneration by regulating cell proliferation. The sequence is that of Protein FAM53B from Danio rerio (Zebrafish).